A 233-amino-acid chain; its full sequence is Preflagellin peptidase (233 aa).

Residue methionine 1 is a topological domain, cytoplasmic. Residues 2-18 (IAYAIGLLGLLIASIQD) traverse the membrane as a helical segment. Over 19 to 23 (IKSRE) the chain is Extracellular. The helical transmembrane segment at 24-46 (IENYIWIGMAVIGLLLSTYLSFT) threads the bilayer. Topologically, residues 47-49 (TGN) are cytoplasmic. Residues 50-72 (FMPIISSISGFIICFIIGYLMFV) form a helical membrane-spanning segment. The Extracellular segment spans residues 73–78 (LGIGGA). A helical membrane pass occupies residues 79-89 (DGKILMGMGAL). Residues 90–110 (IPSYAFPVYSSLQPLYTMEYI) lie on the Cytoplasmic side of the membrane. Residues 111–139 (PWFPLLVFFNGVILMIVLPIYLFFKNLSN) traverse the membrane as a helical segment. Residues 140-207 (GVKPKKLKEY…QYVWATPELP (68 aa)) lie on the Extracellular side of the membrane. Residues 208–219 (LLVPIALSYIIT) traverse the membrane as a helical segment. Residues 220-233 (PFLGDKILSIILPM) lie on the Cytoplasmic side of the membrane.

Belongs to the peptidase A24 family. Archaeal preflagellin peptidase subfamily.

The protein localises to the cell membrane. It carries out the reaction Cleaves the signal peptide of 3 to 12 amino acids from the N-terminal of preflagellin, usually at Arg-Gly-|- or Lys-Gly-|-, to release flagellin.. In terms of biological role, cleaves the N-terminal leader peptide from preflagellins. The processing of preflagellins is necessary for assembly of flagellins into a flagellum structure. The sequence is that of Preflagellin peptidase (flaK) from Methanococcus voltae.